Here is a 321-residue protein sequence, read N- to C-terminus: Glucokinase (321 aa).

8 to 13 contacts ATP; sequence GDVGGT.

It belongs to the bacterial glucokinase family.

It localises to the cytoplasm. It catalyses the reaction D-glucose + ATP = D-glucose 6-phosphate + ADP + H(+). This is Glucokinase from Salmonella schwarzengrund (strain CVM19633).